Reading from the N-terminus, the 29-residue chain is Lambda-theraphotoxin-Ec2c (29 aa).

3 disulfide bridges follow: C2–C16, C9–C21, and C15–C25.

This sequence belongs to the neurotoxin 30 (phrixotoxin) family. Expressed by the venom gland.

It localises to the secreted. Its function is as follows. Both insecticidal and vertebrate neurotoxin that potently blocks insect calcium-activated potassium (BKCa) channels (Slo-type) in cockroach dorsal unpaired median (DUM) neurons (IC(50)=24.6 nM). This occurs in the absence of any shifts in the voltage dependence of activation. May interact with the turret and/or loop region of the external entrance to the channel and does not project deeply into the pore of the channel. Also shows toxicity to mice by introcerebroventicular injection. In Eucratoscelus constrictus (African red-rump baboon spider), this protein is Lambda-theraphotoxin-Ec2c.